Reading from the N-terminus, the 199-residue chain is NADH-quinone oxidoreductase subunit I (199 aa).

4Fe-4S ferredoxin-type domains lie at 45–75 (LNRH…VEGA) and 91–120 (RVYQ…MSNE). [4Fe-4S] cluster-binding residues include Cys-55, Cys-58, Cys-61, Cys-65, Cys-100, Cys-103, Cys-106, and Cys-110. The interval 164–199 (GTPAAHMLSGEDDAASETTLDRSDDHSATYEEAERP) is disordered. Positions 182-199 (TLDRSDDHSATYEEAERP) are enriched in basic and acidic residues.

Belongs to the complex I 23 kDa subunit family. In terms of assembly, NDH-1 is composed of 14 different subunits. Subunits NuoA, H, J, K, L, M, N constitute the membrane sector of the complex. [4Fe-4S] cluster is required as a cofactor.

It localises to the cell membrane. The catalysed reaction is a quinone + NADH + 5 H(+)(in) = a quinol + NAD(+) + 4 H(+)(out). Its function is as follows. NDH-1 shuttles electrons from NADH, via FMN and iron-sulfur (Fe-S) centers, to quinones in the respiratory chain. The immediate electron acceptor for the enzyme in this species is believed to be ubiquinone. Couples the redox reaction to proton translocation (for every two electrons transferred, four hydrogen ions are translocated across the cytoplasmic membrane), and thus conserves the redox energy in a proton gradient. The sequence is that of NADH-quinone oxidoreductase subunit I from Acidothermus cellulolyticus (strain ATCC 43068 / DSM 8971 / 11B).